Here is a 64-residue protein sequence, read N- to C-terminus: Small ribosomal subunit protein bS21 (64 aa).

This sequence belongs to the bacterial ribosomal protein bS21 family.

The sequence is that of Small ribosomal subunit protein bS21 from Oenococcus oeni (strain ATCC BAA-331 / PSU-1).